We begin with the raw amino-acid sequence, 315 residues long: 4-hydroxy-3-methylbut-2-enyl diphosphate reductase (315 aa).

Cysteine 12 provides a ligand contact to [4Fe-4S] cluster. (2E)-4-hydroxy-3-methylbut-2-enyl diphosphate contacts are provided by histidine 43 and histidine 81. Dimethylallyl diphosphate is bound by residues histidine 43 and histidine 81. Residues histidine 43 and histidine 81 each contribute to the isopentenyl diphosphate site. Cysteine 103 contributes to the [4Fe-4S] cluster binding site. Histidine 131 provides a ligand contact to (2E)-4-hydroxy-3-methylbut-2-enyl diphosphate. Histidine 131 contributes to the dimethylallyl diphosphate binding site. Histidine 131 is an isopentenyl diphosphate binding site. The Proton donor role is filled by glutamate 133. Threonine 170 provides a ligand contact to (2E)-4-hydroxy-3-methylbut-2-enyl diphosphate. Cysteine 198 is a [4Fe-4S] cluster binding site. (2E)-4-hydroxy-3-methylbut-2-enyl diphosphate-binding residues include serine 226, asparagine 228, and serine 271. Serine 226, asparagine 228, and serine 271 together coordinate dimethylallyl diphosphate. The isopentenyl diphosphate site is built by serine 226, asparagine 228, and serine 271.

It belongs to the IspH family. [4Fe-4S] cluster serves as cofactor.

It carries out the reaction isopentenyl diphosphate + 2 oxidized [2Fe-2S]-[ferredoxin] + H2O = (2E)-4-hydroxy-3-methylbut-2-enyl diphosphate + 2 reduced [2Fe-2S]-[ferredoxin] + 2 H(+). The catalysed reaction is dimethylallyl diphosphate + 2 oxidized [2Fe-2S]-[ferredoxin] + H2O = (2E)-4-hydroxy-3-methylbut-2-enyl diphosphate + 2 reduced [2Fe-2S]-[ferredoxin] + 2 H(+). It functions in the pathway isoprenoid biosynthesis; dimethylallyl diphosphate biosynthesis; dimethylallyl diphosphate from (2E)-4-hydroxy-3-methylbutenyl diphosphate: step 1/1. The protein operates within isoprenoid biosynthesis; isopentenyl diphosphate biosynthesis via DXP pathway; isopentenyl diphosphate from 1-deoxy-D-xylulose 5-phosphate: step 6/6. Catalyzes the conversion of 1-hydroxy-2-methyl-2-(E)-butenyl 4-diphosphate (HMBPP) into a mixture of isopentenyl diphosphate (IPP) and dimethylallyl diphosphate (DMAPP). Acts in the terminal step of the DOXP/MEP pathway for isoprenoid precursor biosynthesis. The sequence is that of 4-hydroxy-3-methylbut-2-enyl diphosphate reductase from Geobacillus sp. (strain WCH70).